A 272-amino-acid polypeptide reads, in one-letter code: Glutamate racemase (272 aa).

Residues 13-14 and 45-46 contribute to the substrate site; these read DS and YG. The active-site Proton donor/acceptor is the C76. Position 77 to 78 (77 to 78) interacts with substrate; the sequence is NT. The Proton donor/acceptor role is filled by C187. 188 to 189 is a substrate binding site; it reads TH.

Belongs to the aspartate/glutamate racemases family.

It carries out the reaction L-glutamate = D-glutamate. Its pathway is cell wall biogenesis; peptidoglycan biosynthesis. Functionally, provides the (R)-glutamate required for cell wall biosynthesis. The sequence is that of Glutamate racemase from Roseiflexus sp. (strain RS-1).